Here is a 151-residue protein sequence, read N- to C-terminus: Large ribosomal subunit protein uL15 (151 aa).

The interval 1-60 (MAENSPLKAHNLRPAPGAKTAKTRVGRGEASKGKTAGRGTKGTKARYQVPERFEGGQMPL) is disordered.

Belongs to the universal ribosomal protein uL15 family. As to quaternary structure, part of the 50S ribosomal subunit.

Binds to the 23S rRNA. This is Large ribosomal subunit protein uL15 from Streptomyces griseus subsp. griseus (strain JCM 4626 / CBS 651.72 / NBRC 13350 / KCC S-0626 / ISP 5235).